The sequence spans 577 residues: MKRTHNCNQLNISNVNQEVTLKGWIKKIRKMGQITFIDLRDFYGITQIVVGENKQELINNLKPEYVISITGKVIERKSKNADIPTGEIEIEVKNIELINKSELTPFVIENDVEVSEETRMSYRYLDLRRQKIQNNMLLRAKVNSIIRKEFEADNFVEVETPYFGKSTPEGARDFLVPSRLNKNTFYALPQSPQLYKQLLMVSGFDKYYQIVRCFRDEDLRNDRQPEFTQLDMEMSFASATEVQDQIEKVIKKIFLEVKGIDFKEKLIKMPFREAIDLYGSDKPDIRFDLKINTLNEIFDKTQIKLFESFKENKLSIRGICVEELLSKKQLEILTETAKQKSFNNLAFAKFENGTWSGSIASSLSDGEKQALIKQFNIKDKATILLNVGKYEKISDMLGAVRNKVAEILNLADPNDYKLLWIIDFPLYEWSDEESRYVAAHNPFTMPNIKSIDDFETNKEDAIADSYDLVLNGFELGSGGVRITDSGIQQRMFEAVGLDDETIEKNFGWFINAYKYGAPNHAGFAFGIDRVIMLLTHSESIRDVIAFPKNSKGIDMMNDAPSYVEDNQLSELSIKTIK.

Glu-169 is a binding site for L-aspartate. The tract at residues 193-196 (QLYK) is aspartate. Arg-215 is a binding site for L-aspartate. ATP contacts are provided by residues 215 to 217 (RDE) and Gln-224. His-440 provides a ligand contact to L-aspartate. Residue Glu-474 coordinates ATP. Arg-481 contacts L-aspartate. 526-529 (GIDR) is an ATP binding site.

It belongs to the class-II aminoacyl-tRNA synthetase family. Type 1 subfamily. Homodimer.

Its subcellular location is the cytoplasm. The catalysed reaction is tRNA(Asp) + L-aspartate + ATP = L-aspartyl-tRNA(Asp) + AMP + diphosphate. Its function is as follows. Catalyzes the attachment of L-aspartate to tRNA(Asp) in a two-step reaction: L-aspartate is first activated by ATP to form Asp-AMP and then transferred to the acceptor end of tRNA(Asp). This Mesoplasma florum (strain ATCC 33453 / NBRC 100688 / NCTC 11704 / L1) (Acholeplasma florum) protein is Aspartate--tRNA ligase.